The chain runs to 198 residues: tRNA (pseudouridine(54)-N(1))-methyltransferase (198 aa).

S-adenosyl-L-methionine-binding positions include Leu-130, Gly-153, 176-181, and Cys-186; that span reads LSPLEL.

It belongs to the methyltransferase superfamily. TrmY family. Homodimer.

The protein resides in the cytoplasm. It catalyses the reaction pseudouridine(54) in tRNA + S-adenosyl-L-methionine = N(1)-methylpseudouridine(54) in tRNA + S-adenosyl-L-homocysteine + H(+). Its function is as follows. Specifically catalyzes the N1-methylation of pseudouridine at position 54 (Psi54) in tRNAs. In Methanococcus vannielii (strain ATCC 35089 / DSM 1224 / JCM 13029 / OCM 148 / SB), this protein is tRNA (pseudouridine(54)-N(1))-methyltransferase.